The primary structure comprises 159 residues: Cytochrome c-type biogenesis protein CcmE (159 aa).

Topologically, residues 1–8 (MNIRRKNR) are cytoplasmic. The helical; Signal-anchor for type II membrane protein transmembrane segment at 9 to 29 (LWIACAVLAGLALTIGLVLYA) threads the bilayer. Topologically, residues 30 to 159 (LRSNIDLFYT…PASVYKDPAS (130 aa)) are periplasmic. Heme is bound by residues histidine 130 and tyrosine 134. A compositionally biased stretch (basic and acidic residues) spans 132 to 147 (ENYTPPEVEKAMEANH). Residues 132 to 159 (ENYTPPEVEKAMEANHRRPASVYKDPAS) form a disordered region.

It belongs to the CcmE/CycJ family.

Its subcellular location is the cell inner membrane. In terms of biological role, heme chaperone required for the biogenesis of c-type cytochromes. Transiently binds heme delivered by CcmC and transfers the heme to apo-cytochromes in a process facilitated by CcmF and CcmH. This is Cytochrome c-type biogenesis protein CcmE from Escherichia coli (strain 55989 / EAEC).